Reading from the N-terminus, the 297-residue chain is Homoserine kinase (297 aa).

82-92 (PVSRGLGSSAA) provides a ligand contact to ATP.

The protein belongs to the GHMP kinase family. Homoserine kinase subfamily.

The protein resides in the cytoplasm. It carries out the reaction L-homoserine + ATP = O-phospho-L-homoserine + ADP + H(+). Its pathway is amino-acid biosynthesis; L-threonine biosynthesis; L-threonine from L-aspartate: step 4/5. Functionally, catalyzes the ATP-dependent phosphorylation of L-homoserine to L-homoserine phosphate. The sequence is that of Homoserine kinase from Clostridium botulinum (strain Langeland / NCTC 10281 / Type F).